A 204-amino-acid chain; its full sequence is Probable proteasome subunit beta type-3 (204 aa).

The protein belongs to the peptidase T1B family. In terms of assembly, the 26S proteasome consists of a 20S proteasome core and two 19S regulatory subunits. The 20S proteasome core is composed of 28 subunits that are arranged in four stacked rings, resulting in a barrel-shaped structure. The two end rings are each formed by seven alpha subunits, and the two central rings are each formed by seven beta subunits. The catalytic chamber with the active sites is on the inside of the barrel.

The protein resides in the cytoplasm. It is found in the nucleus. Its function is as follows. Non-catalytic component of the proteasome, a multicatalytic proteinase complex which is characterized by its ability to cleave peptides with Arg, Phe, Tyr, Leu, and Glu adjacent to the leaving group at neutral or slightly basic pH. The proteasome has an ATP-dependent proteolytic activity. This Schizosaccharomyces pombe (strain 972 / ATCC 24843) (Fission yeast) protein is Probable proteasome subunit beta type-3 (pup3).